The chain runs to 498 residues: Cytochrome P450 monooxygenase astB (498 aa).

The helical transmembrane segment at phenylalanine 7–threonine 27 threads the bilayer. Residues asparagine 237, asparagine 248, and asparagine 346 are each glycosylated (N-linked (GlcNAc...) asparagine). Cysteine 425 provides a ligand contact to heme.

It belongs to the cytochrome P450 family. The cofactor is heme.

It localises to the membrane. The enzyme catalyses preasperterpenoid A + 4 reduced [NADPH--hemoprotein reductase] + 4 O2 = asperterpenoid A + 4 oxidized [NADPH--hemoprotein reductase] + 5 H2O + 5 H(+). It catalyses the reaction asperterpenoid A + 2 reduced [NADPH--hemoprotein reductase] + 2 O2 = asperterpenoid B + 2 oxidized [NADPH--hemoprotein reductase] + 3 H2O + 3 H(+). It functions in the pathway secondary metabolite biosynthesis; terpenoid biosynthesis. In terms of biological role, cytochrome P450 monooxygenase; part of the gene cluster that mediates the biosynthesis of the asperterpenoids, sesterterpenes that exhibit anti-tuberculosis activity. The first step of the pathway is performed by the sesterterpene synthase astC that possesses both prenyl transferase and terpene cyclase activity, converting isopentenyl diphosphate and dimethylallyl diphosphate into geranylfarnesyl diphosphate (GFPP) and further converting GFPP into preasperterpenoid A, respectively. The cytochrome P450 monooxygenase astB then dually oxidizes preasperterpenoid A to produce asperterpenoid A along with a minor product, asperterpenoid B. Finally, the cytochrome P450 monooxygenase astA converts asperterpenoid A into asperterpenoid C. The sequence is that of Cytochrome P450 monooxygenase astB from Talaromyces wortmannii (Penicillium wortmannii).